A 268-amino-acid polypeptide reads, in one-letter code: Tryptophan synthase alpha chain (268 aa).

Catalysis depends on proton acceptor residues E49 and D60.

The protein belongs to the TrpA family. Tetramer of two alpha and two beta chains.

It carries out the reaction (1S,2R)-1-C-(indol-3-yl)glycerol 3-phosphate + L-serine = D-glyceraldehyde 3-phosphate + L-tryptophan + H2O. The protein operates within amino-acid biosynthesis; L-tryptophan biosynthesis; L-tryptophan from chorismate: step 5/5. Its function is as follows. The alpha subunit is responsible for the aldol cleavage of indoleglycerol phosphate to indole and glyceraldehyde 3-phosphate. This Escherichia coli O127:H6 (strain E2348/69 / EPEC) protein is Tryptophan synthase alpha chain.